The sequence spans 2022 residues: Transient receptor potential cation channel subfamily M member 6 (2022 aa).

Residues 1 to 741 lie on the Cytoplasmic side of the membrane; sequence MKEQPVLERL…MWMGRLKMRK (741 aa). A helical membrane pass occupies residues 742 to 762; that stretch reads NSWLKIIISIILPPTILTLEF. At 763 to 841 the chain is on the extracellular side; that stretch reads KSKAEMSHVP…YEFYSAPIVK (79 aa). Residues 842–862 traverse the membrane as a helical segment; sequence FWFYTMAYLAFLMLFTYTVLV. Over 863-905 the chain is Cytoplasmic; sequence EMQPQPSVQEWLVSIYIFTNAIEVVREICISEPGKFTQKVKVW. Residues 906–926 traverse the membrane as a helical segment; sequence ISEYWNLTETVAIGLFSAGFV. The Extracellular portion of the chain corresponds to 927 to 939; that stretch reads LRWGDPPFHTAGR. A helical membrane pass occupies residues 940-960; the sequence is LIYCIDIIFWFSRLLDFFAVN. Residues 961-972 lie on the Cytoplasmic side of the membrane; that stretch reads QHAGPYVTMIAK. The helical transmembrane segment at 973 to 993 threads the bilayer; that stretch reads MTANMFYIVIIMAIVLLSFGV. Over 994 to 1012 the chain is Extracellular; that stretch reads ARKAILSPKEPPSWSLARD. An intramembrane region (pore-forming) is located at residues 1013-1033; that stretch reads IVFEPYWMIYGEVYAGEIDVC. Residues 1034–1047 are Extracellular-facing; that stretch reads SSQPSCPPGSFLTP. The chain crosses the membrane as a helical span at residues 1048 to 1068; that stretch reads FLQAVYLFVQYIIMVNLLIAF. At 1069-2022 the chain is on the cytoplasmic side; that stretch reads FNNVYLDMES…RNSPEDDMQL (954 aa). A disordered region spans residues 1479–1516; the sequence is TCDSDSSRSEQHQKQAQDSSLSDNSTRSAQSSECSEVG. Basic and acidic residues predominate over residues 1483–1493; that stretch reads DSSRSEQHQKQ. Residues 1494-1512 show a composition bias toward polar residues; the sequence is AQDSSLSDNSTRSAQSSEC. Positions 1750–1980 constitute an Alpha-type protein kinase domain; the sequence is NLDKSMSSWS…CCRKLKLPDL (231 aa). 5 residues coordinate ADP: G1777, G1778, L1779, R1780, and K1804. The residue at position 1851 (T1851) is a Phosphothreonine; by autocatalysis. Positions 1876 and 1879 each coordinate ADP. A Zn(2+)-binding site is contributed by H1909. D1923 acts as the Proton acceptor in catalysis. ADP is bound at residue D1933. Zn(2+) is bound by residues H1966, C1968, and C1972. The segment at 1997-2022 is disordered; the sequence is EIKIESAEEPPARETGRNSPEDDMQL. Positions 1998 to 2016 are enriched in basic and acidic residues; the sequence is IKIESAEEPPARETGRNSP.

This sequence in the C-terminal section; belongs to the protein kinase superfamily. Alpha-type protein kinase family. ALPK subfamily. It in the N-terminal section; belongs to the transient receptor (TC 1.A.4) family. LTrpC subfamily. TRPM6 sub-subfamily. As to quaternary structure, homomers. Forms heteromers with TRPM7; TRPM6 increases the current amplitude of TRPM6/7 heteromers as compared to TRPM7 homomer. Interacts (via kinase domain) with RACK1. Post-translationally, autophosphorylated; autophosphorylation controlls the protein kinase activity of TRPM6 towards their substrates. Autophosphorylation of Thr-1851 in the kinase domain is essential for the inhibitory effect of RACK1. In terms of processing, the C-terminus of TRPM6 is proteolytically cleaved in vivo, in a cell type-specific fashion, releasing the kinase module from the transmembrane domain. The cleaved kinase fragments are translocated to the nucleus to phosphorylate histones and regulate gene expression. As to expression, highly expressed in kidney and colon. Isoform TRPM6a and isoform TRPM6b, are coexpressed with TRPM7 in kidney, and testis, and are also found in several cell lines of lung origin. Isoform TRPM6c is detected only in testis and in NCI-H510A small cell lung carcinoma cells.

It localises to the cell membrane. The protein localises to the apical cell membrane. Its subcellular location is the nucleus. It carries out the reaction L-seryl-[protein] + ATP = O-phospho-L-seryl-[protein] + ADP + H(+). It catalyses the reaction L-threonyl-[protein] + ATP = O-phospho-L-threonyl-[protein] + ADP + H(+). The enzyme catalyses Mg(2+)(in) = Mg(2+)(out). The catalysed reaction is Ca(2+)(in) = Ca(2+)(out). It carries out the reaction Zn(2+)(in) = Zn(2+)(out). Strongly inhibited by intracellular Mg(2+); unlikely to be active at physiological levels of intracellular Mg(2+). In the heteromeric TRPM6-TRPM7 channels complexes, TRPM7 are able to offset the very high sensitivity of TRPM6 to cytosolic Mg(2+) to physiologically relevant concentrations, whereas TRPM6 relieve TRPM7 from the inhibitory action of Mg-ATP. Consequently, the association of TRPM6 with TRPM7 allow for high constitutive activity of TRPM6/7 in the presence of physiological levels of Mg(2+) and Mg-ATP. The kinase activity is controlled through the autophosphorylation of a serine/threonine-rich region located to the N-terminal of the catalytic domain. In terms of biological role, bifunctional protein that combines an ion channel with an intrinsic kinase domain, enabling it to modulate cellular functions either by conducting ions through the pore or by phosphorylating downstream proteins via its kinase domain. Crucial for Mg(2+) homeostasis. Has an important role in epithelial Mg(2+) transport and in the active Mg(2+) absorption in the gut and kidney. However, whether TRPM6 forms functional homomeric channels by itself or functions primarily as a subunit of heteromeric TRPM6-TRPM7 channels, is still under debate. Its function is as follows. The C-terminal kinase domain can be cleaved from the channel segment in a cell-type-specific fashion. The cleaved kinase fragments can translocate to the nucleus, and bind chromatin-remodeling complex proteins to ultimately phosphorylate specific Ser/Thr residues of histones known to be functionally important for cell differentiation and development. The polypeptide is Transient receptor potential cation channel subfamily M member 6 (TRPM6) (Homo sapiens (Human)).